The primary structure comprises 400 residues: ATP-dependent rRNA helicase RRP3 (400 aa).

Residues 1 to 29 (MEFGDLRIDESLIKTCQEKGITRPTEVQR) carry the Q motif motif. In terms of domain architecture, Helicase ATP-binding spans 32-202 (IPAVLGGGDV…SSILKRPKTI (171 aa)). 45–52 (SQTGSGKT) contacts ATP. Positions 150–153 (DEAD) match the DEAD box motif. Residues 229–373 (ALVELLEMSQ…EFKMMKKNFG (145 aa)) enclose the Helicase C-terminal domain.

It belongs to the DEAD box helicase family. DDX47/RRP3 subfamily. In terms of assembly, interacts with the SSU processome.

Its subcellular location is the nucleus. It catalyses the reaction ATP + H2O = ADP + phosphate + H(+). In terms of biological role, ATP-dependent rRNA helicase required for pre-ribosomal RNA processing. Involved in the maturation of the 35S-pre-rRNA and to its cleavage to mature 18S rRNA. This Encephalitozoon cuniculi (strain GB-M1) (Microsporidian parasite) protein is ATP-dependent rRNA helicase RRP3.